Consider the following 220-residue polypeptide: Exodeoxyribonuclease 10 (220 aa).

Mg(2+) is required as a cofactor.

In terms of biological role, capable of degrading both single-strand and double-strand DNA with 3' to 5' polarity. Has higher affinity for ssDNA ends than for dsDNA. This Escherichia coli O6:H1 (strain CFT073 / ATCC 700928 / UPEC) protein is Exodeoxyribonuclease 10 (exoX).